The following is a 284-amino-acid chain: D-tagatose-1,6-bisphosphate aldolase subunit GatY (284 aa).

D82 acts as the Proton donor in catalysis. Zn(2+) contacts are provided by H83 and H180. G181 provides a ligand contact to dihydroxyacetone phosphate. H208 is a Zn(2+) binding site. Residues G209–S211 and N230–T233 contribute to the dihydroxyacetone phosphate site.

Belongs to the class II fructose-bisphosphate aldolase family. TagBP aldolase GatY subfamily. In terms of assembly, forms a complex with GatZ. Zn(2+) serves as cofactor.

The catalysed reaction is D-tagatofuranose 1,6-bisphosphate = D-glyceraldehyde 3-phosphate + dihydroxyacetone phosphate. It functions in the pathway carbohydrate metabolism; D-tagatose 6-phosphate degradation; D-glyceraldehyde 3-phosphate and glycerone phosphate from D-tagatose 6-phosphate: step 2/2. Its function is as follows. Catalytic subunit of the tagatose-1,6-bisphosphate aldolase GatYZ, which catalyzes the reversible aldol condensation of dihydroxyacetone phosphate (DHAP or glycerone-phosphate) with glyceraldehyde 3-phosphate (G3P) to produce tagatose 1,6-bisphosphate (TBP). Requires GatZ subunit for full activity and stability. Is involved in the catabolism of galactitol. This is D-tagatose-1,6-bisphosphate aldolase subunit GatY from Escherichia coli O157:H7.